The chain runs to 498 residues: Myotilin (498 aa).

3 disordered regions span residues 1–46 (MFNY…QPRQ), 64–151 (MSSS…HEIQ), and 202–241 (QDDSGAQDSQQHNSEHARLQVPTSQVRSRSTSRGDVNDQD). Position 20 is an omega-N-methylarginine (Arg20). Residues 29-43 (SSFSSQTKQSSIIIQ) are compositionally biased toward low complexity. The span at 77–138 (AGSNPGQRVT…INAKPSQTAN (62 aa)) shows a compositional bias: polar residues. The tract at residues 79–150 (SNPGQRVTTT…PIPRTPDHEI (72 aa)) is necessary for interaction with ACTN1. Over residues 202-212 (QDDSGAQDSQQ) the composition is skewed to low complexity. The necessary for interaction with FLNC stretch occupies residues 215–493 (SEHARLQVPT…QRLAAQSGLY (279 aa)). The segment at 215–498 (SEHARLQVPT…QSGLYESEEL (284 aa)) is necessary for interaction with ACTA1. Residues 222-235 (VPTSQVRSRSTSRG) show a composition bias toward polar residues. 2 Ig-like C2-type domains span residues 250–335 (PRFI…ATFT) and 349–441 (PMFI…LDVT).

It belongs to the myotilin/palladin family. In terms of assembly, homodimer. Interacts with ACTA1, ACTN1, FLNA, FLNB, FLNC and MYOZ2. Interacts with the C-terminal region of MYOZ1. As to expression, expressed in skeletal muscle (at protein level). Expressed in skeletal muscle, heart, bone marrow and thyroid gland.

The protein localises to the cell membrane. The protein resides in the sarcolemma. It localises to the cytoplasm. Its subcellular location is the cytoskeleton. It is found in the myofibril. The protein localises to the sarcomere. The protein resides in the z line. In terms of biological role, component of a complex of multiple actin cross-linking proteins. Involved in the control of myofibril assembly and stability at the Z lines in muscle cells. In Homo sapiens (Human), this protein is Myotilin (MYOT).